A 917-amino-acid polypeptide reads, in one-letter code: Outer membrane protein SlpA (917 aa).

The signal sequence occupies residues 1-23 (MKKRLVTLLAGLLTVLSMGFGLA). In terms of domain architecture, SLH spans 24-84 (QFSDVPAGHW…QQIEEELKTQ (61 aa)).

In terms of assembly, homotrimer.

Its subcellular location is the cell outer membrane. In terms of biological role, plays an important role in the structural organization and integrity of the cell envelope, bridging the outer membrane to the peptidoglyan layer. Appears to be a nonselective channel. This chain is Outer membrane protein SlpA (slpA), found in Thermus thermophilus (strain ATCC 27634 / DSM 579 / HB8).